The following is a 170-amino-acid chain: MVKSQKVIDVLNTHYNLNLELGSIYAQYAHIADDQFSMPFLAKFIADLSNDKLGVHKNLISEYARKVEIPLHTKFSVDVNFKPANPKELIKHILDTELKVRKHVANMAKVCLEENDFETFSFVKWFVDDGIKDFDDVRTIHDFFENATNNLQVEYAIRKYLKQMKVEEEK.

Positions 1 to 148 constitute a Ferritin-like diiron domain; that stretch reads MVKSQKVIDV…TIHDFFENAT (148 aa).

This is an uncharacterized protein from Ureaplasma parvum serovar 3 (strain ATCC 700970).